Reading from the N-terminus, the 320-residue chain is MNLVRTAMLLAFMTALFMFVGFLIGGRAGMMIAFVIAAGMNFFSYWNSDRMVLSAYRAQQVDERNAPEFFRIVRDLARNAGLPMPKVYLYDSPQPNAFATGRNPENAAVAASTGLLSALSAEEVAGVMAHELAHIQNRDTLTMTITATLAGAISMLGNFAFFFGGNRENNSNPLGFVGVIVAMIVAPLAAMLVQMAISRTREYSADRRGAEICGNPLWLASALGKIARGAAHVPNEDAERNPATAHMFIINPLSGERMDNLFSTHPNTENRIAALHDMAQSGMNVSTSPARAANPSRKSRSVPDTGLGRGGSQPPKGPWS.

Transmembrane regions (helical) follow at residues 6–26 and 28–48; these read TAML…LIGG and AGMM…YWNS. His130 is a binding site for Zn(2+). Glu131 is an active-site residue. His134 contacts Zn(2+). 2 consecutive transmembrane segments (helical) span residues 145 to 165 and 173 to 193; these read ITAT…FFGG and PLGF…AMLV. Zn(2+) is bound at residue Glu202. A disordered region spans residues 283 to 320; it reads MNVSTSPARAANPSRKSRSVPDTGLGRGGSQPPKGPWS.

This sequence belongs to the peptidase M48B family. Zn(2+) is required as a cofactor.

It localises to the cell inner membrane. In Rhizobium johnstonii (strain DSM 114642 / LMG 32736 / 3841) (Rhizobium leguminosarum bv. viciae), this protein is Protease HtpX homolog.